The chain runs to 245 residues: Adapter protein MecA (245 aa).

Belongs to the MecA family. As to quaternary structure, homodimer.

Enables the recognition and targeting of unfolded and aggregated proteins to the ClpC protease or to other proteins involved in proteolysis. This Streptococcus pneumoniae (strain Hungary19A-6) protein is Adapter protein MecA.